The chain runs to 318 residues: Aspartate carbamoyltransferase catalytic subunit (318 aa).

Arg-66 and Thr-67 together coordinate carbamoyl phosphate. Lys-94 lines the L-aspartate pocket. The carbamoyl phosphate site is built by Arg-116, His-144, and Gln-147. Positions 177 and 231 each coordinate L-aspartate. Positions 272 and 273 each coordinate carbamoyl phosphate.

The protein belongs to the aspartate/ornithine carbamoyltransferase superfamily. ATCase family. In terms of assembly, heterododecamer (2C3:3R2) of six catalytic PyrB chains organized as two trimers (C3), and six regulatory PyrI chains organized as three dimers (R2).

It carries out the reaction carbamoyl phosphate + L-aspartate = N-carbamoyl-L-aspartate + phosphate + H(+). It participates in pyrimidine metabolism; UMP biosynthesis via de novo pathway; (S)-dihydroorotate from bicarbonate: step 2/3. Its function is as follows. Catalyzes the condensation of carbamoyl phosphate and aspartate to form carbamoyl aspartate and inorganic phosphate, the committed step in the de novo pyrimidine nucleotide biosynthesis pathway. The polypeptide is Aspartate carbamoyltransferase catalytic subunit (Frankia casuarinae (strain DSM 45818 / CECT 9043 / HFP020203 / CcI3)).